The chain runs to 582 residues: Potassium-transporting ATPase potassium-binding subunit (582 aa).

11 consecutive transmembrane segments (helical) span residues 6–26 (LVQL…LGLY), 65–85 (IYAL…YVLE), 87–107 (LQGG…FVAV), 136–156 (GLAV…VALI), 178–198 (VLYI…WQGV), 277–297 (LEML…GVMI), 304–324 (LAIL…TLAA), 402–422 (GLYG…LMVG), 441–461 (ALVI…AAVI), 505–525 (IAGA…VLAL), and 546–566 (GGIF…LTFV).

It belongs to the KdpA family. The system is composed of three essential subunits: KdpA, KdpB and KdpC.

It localises to the cell inner membrane. Its function is as follows. Part of the high-affinity ATP-driven potassium transport (or Kdp) system, which catalyzes the hydrolysis of ATP coupled with the electrogenic transport of potassium into the cytoplasm. This subunit binds the periplasmic potassium ions and delivers the ions to the membrane domain of KdpB through an intramembrane tunnel. This is Potassium-transporting ATPase potassium-binding subunit from Solidesulfovibrio magneticus (strain ATCC 700980 / DSM 13731 / RS-1) (Desulfovibrio magneticus).